The chain runs to 511 residues: GMP synthase [glutamine-hydrolyzing] (511 aa).

A Glutamine amidotransferase type-1 domain is found at Leu6–Asp196. The Nucleophile role is filled by Cys83. Catalysis depends on residues His170 and Glu172. In terms of domain architecture, GMPS ATP-PPase spans Trp197–Arg386. Ser224–Ser230 serves as a coordination point for ATP.

In terms of assembly, homodimer.

The enzyme catalyses XMP + L-glutamine + ATP + H2O = GMP + L-glutamate + AMP + diphosphate + 2 H(+). The protein operates within purine metabolism; GMP biosynthesis; GMP from XMP (L-Gln route): step 1/1. In terms of biological role, catalyzes the synthesis of GMP from XMP. This Oceanobacillus iheyensis (strain DSM 14371 / CIP 107618 / JCM 11309 / KCTC 3954 / HTE831) protein is GMP synthase [glutamine-hydrolyzing].